Reading from the N-terminus, the 944-residue chain is Probable UDP-N-acetylglucosamine--peptide N-acetylglucosaminyltransferase SPINDLY (944 aa).

TPR repeat units lie at residues 34–67, 68–101, 102–135, 143–176, 177–210, 211–244, 252–285, 286–319, 320–353, 355–387, and 388–421; these read GTDALRYANILRSRNKFADALQLYTTVLDKDGAN, VEALIGKGICLQAQSLPRQALDCFTEAVKVDPKN, ACALTHCGMIYKDEGHLVEAAEAYQKARSADPSY, AIVLTDLGTSLKLAGNTEDGIQKYCEALEVDSHY, APAYYNLGVVYSEMMQFDVALTCYEKAALERPLY, AEAYCNMGVIYKNRGELDAAIACYDRCLTISPNF, AIALTDLGTKVKIEGDINQGVAYYKKALFYNWHY, ADAMYNLGVAYGEMLNFEMAIVFYELALHFNPRC, AEACNNLGVIYKDRDNLDKAVECYQMALSIKPNF, QSLNNLGVVYTVQGKMDAAASMIEKAILANPTY, and AEAYNNLGVLYRDAGSITLSVQAYERCLQIDPDS. Positions 422 to 944 are catalytic region; sequence RNAGQNRLLA…RCEANGHSSR (523 aa). Residues 873-944 are disordered; the sequence is NATAEEDNQS…RCEANGHSSR (72 aa). A compositionally biased stretch (polar residues) spans 897-911; sequence PQPQIMVNGVTSPEG.

Belongs to the glycosyltransferase 41 family. O-GlcNAc transferase subfamily. Expressed in all parts of plants, including immature leaf blade, leaf sheath, mature leaf blade, roots, germinating embryos and aleurone layers.

Its subcellular location is the nucleus. It carries out the reaction L-seryl-[protein] + UDP-N-acetyl-alpha-D-glucosamine = 3-O-(N-acetyl-beta-D-glucosaminyl)-L-seryl-[protein] + UDP + H(+). It catalyses the reaction L-threonyl-[protein] + UDP-N-acetyl-alpha-D-glucosamine = 3-O-(N-acetyl-beta-D-glucosaminyl)-L-threonyl-[protein] + UDP + H(+). Its pathway is protein modification; protein glycosylation. In terms of biological role, probable O-linked N-acetylglucosamine transferase (OGT) involved in various processes such as gibberellin (GA) signaling pathway. OGTs catalyze the addition of nucleotide-activated sugars directly onto the polypeptide through O-glycosidic linkage with the hydroxyl of serine or threonine. Probably acts by adding O-linked sugars to yet unknown proteins. The chain is Probable UDP-N-acetylglucosamine--peptide N-acetylglucosaminyltransferase SPINDLY (SPY) from Hordeum vulgare (Barley).